The following is a 445-amino-acid chain: 4-hydroxyphenylpyruvate dioxygenase (445 aa).

Residues 1–11 show a composition bias toward polar residues; that stretch reads MGHQNAAVSEN. The segment at 1 to 20 is disordered; the sequence is MGHQNAAVSENQNHDDGAAS. 2 consecutive VOC domains span residues 46-192 and 223-383; these read RFHH…YVSY and RLDH…IFTK. Fe cation is bound by residues His-226, His-308, and Glu-394.

This sequence belongs to the 4HPPD family. As to quaternary structure, homodimer. It depends on Fe cation as a cofactor.

The protein resides in the cytoplasm. The enzyme catalyses 3-(4-hydroxyphenyl)pyruvate + O2 = homogentisate + CO2. Its pathway is amino-acid degradation; L-phenylalanine degradation; acetoacetate and fumarate from L-phenylalanine: step 3/6. It participates in cofactor biosynthesis; prenylquinone biosynthesis. Functionally, catalyzes the conversion of 4-hydroxyphenylpyruvic acid to homogentisic acid, one of the steps in tyrosine catabolism. The protein is 4-hydroxyphenylpyruvate dioxygenase (HPD) of Arabidopsis thaliana (Mouse-ear cress).